Reading from the N-terminus, the 375-residue chain is Histidine biosynthesis bifunctional protein HisB (375 aa).

The histidinol-phosphatase stretch occupies residues 1–168; sequence MTPIVFIDRD…GIAHTLADAP (168 aa). Asp-8 functions as the Nucleophile in the catalytic mechanism. The Mg(2+) site is built by Asp-8, Asp-10, and Asp-128. The Proton donor role is filled by Asp-10. The tract at residues 169–375 is imidazoleglycerol-phosphate dehydratase; sequence RRAVVQRHTK…HVLPSTKGAL (207 aa).

The protein in the N-terminal section; belongs to the histidinol-phosphatase family. In the C-terminal section; belongs to the imidazoleglycerol-phosphate dehydratase family. Requires Mg(2+) as cofactor.

The protein resides in the cytoplasm. The enzyme catalyses D-erythro-1-(imidazol-4-yl)glycerol 3-phosphate = 3-(imidazol-4-yl)-2-oxopropyl phosphate + H2O. It carries out the reaction L-histidinol phosphate + H2O = L-histidinol + phosphate. It functions in the pathway amino-acid biosynthesis; L-histidine biosynthesis; L-histidine from 5-phospho-alpha-D-ribose 1-diphosphate: step 6/9. Its pathway is amino-acid biosynthesis; L-histidine biosynthesis; L-histidine from 5-phospho-alpha-D-ribose 1-diphosphate: step 8/9. This is Histidine biosynthesis bifunctional protein HisB from Xylella fastidiosa (strain Temecula1 / ATCC 700964).